Reading from the N-terminus, the 76-residue chain is uORF2 protein (76 aa).

Its function is as follows. Plays a role in viral replication. The protein is uORF2 protein of Homo sapiens (Human).